A 442-amino-acid polypeptide reads, in one-letter code: Hydroxycinnamoyltransferase 1 (442 aa).

Active-site proton acceptor residues include His159 and Asp389.

Belongs to the plant acyltransferase family. In terms of tissue distribution, expressed in roots, leaves, stems and seeds.

Its function is as follows. Hydroxycinnamoyl transferase that catalyzes the transfer of an acyl from p-coumaryol-CoA to various acyl acceptors. Can use feruloyl-CoA and caffeoyl-CoA as acyl donors. The polypeptide is Hydroxycinnamoyltransferase 1 (Oryza sativa subsp. japonica (Rice)).